A 570-amino-acid polypeptide reads, in one-letter code: Sulfite reductase [NADPH] hemoprotein beta-component (570 aa).

[4Fe-4S] cluster is bound by residues Cys-434, Cys-440, Cys-479, and Cys-483. Cys-483 serves as a coordination point for siroheme.

Belongs to the nitrite and sulfite reductase 4Fe-4S domain family. As to quaternary structure, alpha(8)-beta(8). The alpha component is a flavoprotein, the beta component is a hemoprotein. It depends on siroheme as a cofactor. The cofactor is [4Fe-4S] cluster.

It carries out the reaction hydrogen sulfide + 3 NADP(+) + 3 H2O = sulfite + 3 NADPH + 4 H(+). It functions in the pathway sulfur metabolism; hydrogen sulfide biosynthesis; hydrogen sulfide from sulfite (NADPH route): step 1/1. Its function is as follows. Component of the sulfite reductase complex that catalyzes the 6-electron reduction of sulfite to sulfide. This is one of several activities required for the biosynthesis of L-cysteine from sulfate. The sequence is that of Sulfite reductase [NADPH] hemoprotein beta-component (cysI) from Salmonella typhimurium (strain LT2 / SGSC1412 / ATCC 700720).